Consider the following 538-residue polypeptide: Calcium-dependent protein kinase 8 (538 aa).

The segment at 1–26 (MGNCCGTPATAEEGGKRRRRGKQKKA) is disordered. A lipid anchor (N-myristoyl glycine) is attached at glycine 2. The span at 16–25 (KRRRRGKQKK) shows a compositional bias: basic residues. In terms of domain architecture, Protein kinase spans 64–322 (YELGGELGRG…AEQVLEHPWL (259 aa)). ATP contacts are provided by residues 70–78 (LGRGEFGIT) and lysine 93. Residue aspartate 188 is the Proton acceptor of the active site. Residues 328–358 (MPDIPLGDAVRARLQQFAAMNKLKKKALKVI) are autoinhibitory domain. 4 EF-hand domains span residues 365–400 (EEAA…LGNQ), 401–436 (MPDS…VRKI), 437–472 (GNDE…EIDG), and 473–508 (NDED…GTDW). Residues aspartate 378, serine 380, asparagine 382, glutamine 384, aspartate 389, aspartate 414, aspartate 416, asparagine 418, glutamate 425, aspartate 450, asparagine 452, serine 454, tyrosine 456, glutamate 461, aspartate 486, aspartate 488, aspartate 490, lysine 492, and glutamate 497 each coordinate Ca(2+).

The protein belongs to the protein kinase superfamily. Ser/Thr protein kinase family. CDPK subfamily.

It localises to the membrane. The enzyme catalyses L-seryl-[protein] + ATP = O-phospho-L-seryl-[protein] + ADP + H(+). It carries out the reaction L-threonyl-[protein] + ATP = O-phospho-L-threonyl-[protein] + ADP + H(+). Its activity is regulated as follows. Activated by calcium. Autophosphorylation may play an important role in the regulation of the kinase activity. May play a role in signal transduction pathways that involve calcium as a second messenger. The polypeptide is Calcium-dependent protein kinase 8 (Oryza sativa subsp. japonica (Rice)).